The chain runs to 185 residues: Ribosome-recycling factor (185 aa).

The protein belongs to the RRF family.

Its subcellular location is the cytoplasm. Responsible for the release of ribosomes from messenger RNA at the termination of protein biosynthesis. May increase the efficiency of translation by recycling ribosomes from one round of translation to another. This is Ribosome-recycling factor from Yersinia pseudotuberculosis serotype O:1b (strain IP 31758).